We begin with the raw amino-acid sequence, 144 residues long: Granulocyte-macrophage colony-stimulating factor (144 aa).

The signal sequence occupies residues 1–17 (MWLQNLLFLNTVVCSIS). O-linked (GalNAc...) serine glycans are attached at residues serine 22 and serine 24. Threonine 27 carries O-linked (GalNAc...) threonine glycosylation. N-linked (GlcNAc...) asparagine glycans are attached at residues asparagine 44, asparagine 45, and asparagine 54. Intrachain disulfides connect cysteine 71/cysteine 113 and cysteine 105/cysteine 138.

Belongs to the GM-CSF family. As to quaternary structure, monomer. The signaling GM-CSF receptor complex is a dodecamer of two head-to-head hexamers of two alpha, two beta, and two ligand subunits.

The protein localises to the secreted. In terms of biological role, cytokine that stimulates the growth and differentiation of hematopoietic precursor cells from various lineages, including granulocytes, macrophages, eosinophils and erythrocytes. The protein is Granulocyte-macrophage colony-stimulating factor (CSF2) of Felis catus (Cat).